Consider the following 311-residue polypeptide: Probable manganese-dependent inorganic pyrophosphatase (311 aa).

Mn(2+) is bound by residues His-9, Asp-13, Asp-15, Asp-77, His-99, and Asp-151.

Belongs to the PPase class C family. The cofactor is Mn(2+).

The protein resides in the cytoplasm. It catalyses the reaction diphosphate + H2O = 2 phosphate + H(+). This chain is Probable manganese-dependent inorganic pyrophosphatase, found in Streptococcus sanguinis (strain SK36).